The chain runs to 255 residues: Type III pantothenate kinase (255 aa).

Residue 6 to 13 (DVGNTNTV) participates in ATP binding. Substrate is bound at residue 108–111 (GADR). Residue D110 is the Proton acceptor of the active site. Residue D130 coordinates K(+). T133 contacts ATP. T185 contacts substrate.

The protein belongs to the type III pantothenate kinase family. As to quaternary structure, homodimer. Requires NH4(+) as cofactor. K(+) serves as cofactor.

It is found in the cytoplasm. It carries out the reaction (R)-pantothenate + ATP = (R)-4'-phosphopantothenate + ADP + H(+). It functions in the pathway cofactor biosynthesis; coenzyme A biosynthesis; CoA from (R)-pantothenate: step 1/5. In terms of biological role, catalyzes the phosphorylation of pantothenate (Pan), the first step in CoA biosynthesis. The polypeptide is Type III pantothenate kinase (Hyphomonas neptunium (strain ATCC 15444)).